A 230-amino-acid chain; its full sequence is uncharacterized protein (230 aa).

The region spanning 2 to 69 (HRLAKIISNA…KPRLWIYYKP (68 aa)) is the S4 RNA-binding domain. Asp102 serves as the catalytic Nucleophile.

It belongs to the pseudouridine synthase RsuA family.

The enzyme catalyses a uridine in RNA = a pseudouridine in RNA. This is an uncharacterized protein from Rickettsia conorii (strain ATCC VR-613 / Malish 7).